Consider the following 528-residue polypeptide: Homoserine O-acetyltransferase (528 aa).

The 186-residue stretch at 60-245 (LVICHALTGS…AALLTYRSRD (186 aa)) folds into the AB hydrolase-1 domain. Catalysis depends on Ser154, which acts as the Nucleophile. Disordered regions lie at residues 250–335 (RFGR…VKTQ) and 388–413 (DLSA…DATE). The segment covering 273 to 282 (QETTDPSVPS) has biased composition (polar residues). The segment covering 295–304 (AWREHNDGHR) has biased composition (basic and acidic residues). Residues 389–409 (LSAPSRDTSLSSLSSGLPSSP) show a composition bias toward low complexity. Catalysis depends on residues Asp438 and His467.

The protein belongs to the AB hydrolase superfamily. MetX family.

The protein localises to the cytoplasm. The catalysed reaction is L-homoserine + acetyl-CoA = O-acetyl-L-homoserine + CoA. It functions in the pathway amino-acid biosynthesis; L-methionine biosynthesis via de novo pathway; O-acetyl-L-homoserine from L-homoserine: step 1/1. With respect to regulation, inhibited by 6-carbamoyl-3a,4,5,9b-tetrahydro-3H-cyclopenta[ c]quinoline-4-carboxylic acid (CTCQC). Its function is as follows. Commits homoserine to the methionine biosynthesis pathway by catalyzing its O-acetylation. The polypeptide is Homoserine O-acetyltransferase (Cryptococcus neoformans var. grubii serotype A (strain H99 / ATCC 208821 / CBS 10515 / FGSC 9487) (Filobasidiella neoformans var. grubii)).